Here is a 264-residue protein sequence, read N- to C-terminus: Phosphoribosylaminoimidazole-succinocarboxamide synthase (264 aa).

Belongs to the SAICAR synthetase family.

It carries out the reaction 5-amino-1-(5-phospho-D-ribosyl)imidazole-4-carboxylate + L-aspartate + ATP = (2S)-2-[5-amino-1-(5-phospho-beta-D-ribosyl)imidazole-4-carboxamido]succinate + ADP + phosphate + 2 H(+). It participates in purine metabolism; IMP biosynthesis via de novo pathway; 5-amino-1-(5-phospho-D-ribosyl)imidazole-4-carboxamide from 5-amino-1-(5-phospho-D-ribosyl)imidazole-4-carboxylate: step 1/2. This Synechocystis sp. (strain ATCC 27184 / PCC 6803 / Kazusa) protein is Phosphoribosylaminoimidazole-succinocarboxamide synthase (purC).